The following is a 320-amino-acid chain: Thioredoxin reductase (320 aa).

Residue 36-43 (TGMEQGGQ) coordinates FAD. A disulfide bond links cysteine 136 and cysteine 139. Residue 287 to 296 (DVTDHVYRQA) participates in FAD binding.

It belongs to the class-II pyridine nucleotide-disulfide oxidoreductase family. Homodimer. FAD is required as a cofactor.

The protein resides in the cytoplasm. It catalyses the reaction [thioredoxin]-dithiol + NADP(+) = [thioredoxin]-disulfide + NADPH + H(+). The chain is Thioredoxin reductase (trxB) from Coxiella burnetii (strain RSA 493 / Nine Mile phase I).